We begin with the raw amino-acid sequence, 190 residues long: Flavodoxin-like domain-containing protein BilS (190 aa).

It participates in porphyrin-containing compound metabolism; protoheme degradation. Its function is as follows. Together with BilR, catalyzes reduction of mesobilirubin and/or bilirubin to urobilinogen, a key step during heme degradation. BilS is probably involved in electron transfer for the bilirubin reductase BilR. The protein is Flavodoxin-like domain-containing protein BilS of Clostridium symbiosum (strain WAL-14163).